Consider the following 802-residue polypeptide: Phenylalanine--tRNA ligase beta subunit (802 aa).

The 116-residue stretch at 40-155 folds into the tRNA-binding domain; the sequence is SASLKNVVVG…AHVETGVNAI (116 aa). A B5 domain is found at 409–484; the sequence is KAVNKIETSL…RIYGYDEIPV (76 aa). Positions 462, 468, 471, and 472 each coordinate Mg(2+). In terms of domain architecture, FDX-ACB spans 709–802; it reads PRYPEMTRDL…LQEKLNAIIR (94 aa).

This sequence belongs to the phenylalanyl-tRNA synthetase beta subunit family. Type 1 subfamily. Tetramer of two alpha and two beta subunits. The cofactor is Mg(2+).

Its subcellular location is the cytoplasm. The enzyme catalyses tRNA(Phe) + L-phenylalanine + ATP = L-phenylalanyl-tRNA(Phe) + AMP + diphosphate + H(+). The chain is Phenylalanine--tRNA ligase beta subunit from Listeria monocytogenes serovar 1/2a (strain ATCC BAA-679 / EGD-e).